Here is a 358-residue protein sequence, read N- to C-terminus: MLERLNFIENKYEELSNKISDPSVMANQKEWQKLCKEHADLEIIVNTYREYKKAQEDLESDKEMLKEESDKELREMAQEEIKELTLKLEDLERELTILLLPKDPNDDKDVFIEIRAGAGGEEAALFASNLLRMYTRYAERKNWKVETMSLNATDIGGFKEVTVAIKGKGAYSRLKYESGVHRVQRVPDTESSGRIHTSTATVAVLPEVDDVDININANDLRIDVYRASGHGGQCVNTTDSAVRITHLPTGLVVTCQDEKSQLKNKEKAMKVLKARLFEAAEAERAASIAEDRKSQVGTGDRSERIRTYNYPQGRITDHRIGLTLYKLETFLDGDIDEVIEALVTEDQAEKMKDLGRVN.

An N5-methylglutamine modification is found at Q233.

It belongs to the prokaryotic/mitochondrial release factor family. Post-translationally, methylated by PrmC. Methylation increases the termination efficiency of RF1.

It localises to the cytoplasm. Functionally, peptide chain release factor 1 directs the termination of translation in response to the peptide chain termination codons UAG and UAA. This chain is Peptide chain release factor 1, found in Clostridium botulinum (strain Okra / Type B1).